The primary structure comprises 366 residues: Phospho-N-acetylmuramoyl-pentapeptide-transferase (366 aa).

Transmembrane regions (helical) follow at residues 27–47 (AALF…IASL), 71–91 (TPTM…LLWA), 93–113 (LSSI…AIGF), 138–158 (FVIA…AGAA), 174–194 (LMLN…VGAG), 205–225 (GLAI…AYLA), 245–265 (LAVI…FNAP), 268–288 (AIFM…TVAV), 297–317 (VIIG…VFWF), and 343–363 (QVVI…LSTL).

This sequence belongs to the glycosyltransferase 4 family. MraY subfamily. Mg(2+) is required as a cofactor.

Its subcellular location is the cell inner membrane. The catalysed reaction is UDP-N-acetyl-alpha-D-muramoyl-L-alanyl-gamma-D-glutamyl-meso-2,6-diaminopimeloyl-D-alanyl-D-alanine + di-trans,octa-cis-undecaprenyl phosphate = di-trans,octa-cis-undecaprenyl diphospho-N-acetyl-alpha-D-muramoyl-L-alanyl-D-glutamyl-meso-2,6-diaminopimeloyl-D-alanyl-D-alanine + UMP. Its pathway is cell wall biogenesis; peptidoglycan biosynthesis. Its function is as follows. Catalyzes the initial step of the lipid cycle reactions in the biosynthesis of the cell wall peptidoglycan: transfers peptidoglycan precursor phospho-MurNAc-pentapeptide from UDP-MurNAc-pentapeptide onto the lipid carrier undecaprenyl phosphate, yielding undecaprenyl-pyrophosphoryl-MurNAc-pentapeptide, known as lipid I. In Sinorhizobium medicae (strain WSM419) (Ensifer medicae), this protein is Phospho-N-acetylmuramoyl-pentapeptide-transferase.